Reading from the N-terminus, the 427-residue chain is Enolase (427 aa).

Gln-163 is a (2R)-2-phosphoglycerate binding site. Glu-205 serves as the catalytic Proton donor. Residues Asp-242, Glu-285, and Asp-312 each coordinate Mg(2+). 4 residues coordinate (2R)-2-phosphoglycerate: Lys-337, Arg-366, Ser-367, and Lys-388. The active-site Proton acceptor is Lys-337.

The protein belongs to the enolase family. Requires Mg(2+) as cofactor.

The protein resides in the cytoplasm. It is found in the secreted. It localises to the cell surface. It carries out the reaction (2R)-2-phosphoglycerate = phosphoenolpyruvate + H2O. It participates in carbohydrate degradation; glycolysis; pyruvate from D-glyceraldehyde 3-phosphate: step 4/5. In terms of biological role, catalyzes the reversible conversion of 2-phosphoglycerate (2-PG) into phosphoenolpyruvate (PEP). It is essential for the degradation of carbohydrates via glycolysis. This chain is Enolase, found in Rhodopseudomonas palustris (strain BisB5).